We begin with the raw amino-acid sequence, 854 residues long: Translation initiation factor IF-2 (854 aa).

2 disordered regions span residues R52–G79 and R128–Q265. Residues S61–S75 are compositionally biased toward polar residues. Basic and acidic residues-rich tracts occupy residues R128–A150 and V211–R232. Residues R247–P257 are compositionally biased toward basic residues. The 170-residue stretch at K354–T523 folds into the tr-type G domain. The tract at residues G363–T370 is G1. Residue G363–T370 participates in GTP binding. The tract at residues G388–H392 is G2. The G3 stretch occupies residues D409–G412. Position 409–413 (D409–H413) interacts with GTP. Residues T463–D466 form a G4 region. Positions S499 to K501 are G5.

This sequence belongs to the TRAFAC class translation factor GTPase superfamily. Classic translation factor GTPase family. IF-2 subfamily.

Its subcellular location is the cytoplasm. One of the essential components for the initiation of protein synthesis. Protects formylmethionyl-tRNA from spontaneous hydrolysis and promotes its binding to the 30S ribosomal subunits. Also involved in the hydrolysis of GTP during the formation of the 70S ribosomal complex. This chain is Translation initiation factor IF-2, found in Marinomonas sp. (strain MWYL1).